The following is a 240-amino-acid chain: Probable septum site-determining protein MinC (240 aa).

It belongs to the MinC family. In terms of assembly, interacts with MinD and FtsZ.

Cell division inhibitor that blocks the formation of polar Z ring septums. Rapidly oscillates between the poles of the cell to destabilize FtsZ filaments that have formed before they mature into polar Z rings. Prevents FtsZ polymerization. The protein is Probable septum site-determining protein MinC of Buchnera aphidicola subsp. Cinara cedri (strain Cc).